Consider the following 292-residue polypeptide: Probable ABC transporter phosphonate/phosphite binding protein PhnD2 (292 aa).

The N-terminal stretch at 1–20 (MKLKSLLSVFTISIVALTSA) is a signal peptide. The N-palmitoyl cysteine moiety is linked to residue Cys-21. The S-diacylglycerol cysteine moiety is linked to residue Cys-21.

It belongs to the phosphate/phosphite/phosphonate binding protein family. In terms of assembly, the complex may be composed of two ATP-binding proteins (PhnC2), two transmembrane proteins (PhnE2) and a solute-binding protein (PhnD2).

It localises to the cell membrane. Its function is as follows. Probably part of the ABC transporter complex PhnC2D2E2. Binds strongly to methylphosphonate (MPn), ethylphosphonate (EPn) and inorganic phosphite. The chain is Probable ABC transporter phosphonate/phosphite binding protein PhnD2 from Prochlorococcus marinus (strain MIT 9301).